The primary structure comprises 250 residues: Small ribosomal subunit protein uS3 (250 aa).

Residues 39–107 form the KH type-2 domain; the sequence is VREFLTKKLK…PAQVSINEID (69 aa). Positions 215–250 are disordered; the sequence is MNPAPAEERPAKRGRGRGEGQERRGRRGDRAADKGE. Basic and acidic residues predominate over residues 220 to 250; it reads AEERPAKRGRGRGEGQERRGRRGDRAADKGE.

It belongs to the universal ribosomal protein uS3 family. As to quaternary structure, part of the 30S ribosomal subunit. Forms a tight complex with proteins S10 and S14.

Binds the lower part of the 30S subunit head. Binds mRNA in the 70S ribosome, positioning it for translation. This Acinetobacter baumannii (strain SDF) protein is Small ribosomal subunit protein uS3.